The sequence spans 200 residues: Recombination protein RecR (200 aa).

The C4-type zinc-finger motif lies at 58 to 73; that stretch reads CSVCGNLTDTDPCFIC. The 96-residue stretch at 81–176 folds into the Toprim domain; it reads DLLCVVERPR…SVTRIAHGLP (96 aa).

It belongs to the RecR family.

Functionally, may play a role in DNA repair. It seems to be involved in an RecBC-independent recombinational process of DNA repair. It may act with RecF and RecO. This is Recombination protein RecR from Pelotomaculum thermopropionicum (strain DSM 13744 / JCM 10971 / SI).